A 208-amino-acid chain; its full sequence is Small ribosomal subunit protein eS8 (208 aa).

Positions 1–40 (MGISRDNWHKRRKTGGKRKPVHKKRKYELGRPPSNTKLGP) are disordered. Positions 8–26 (WHKRRKTGGKRKPVHKKRK) are enriched in basic residues.

Belongs to the eukaryotic ribosomal protein eS8 family. In terms of assembly, component of the small ribosomal subunit.

It is found in the cytoplasm. Its function is as follows. Component of the small ribosomal subunit. The ribosome is a large ribonucleoprotein complex responsible for the synthesis of proteins in the cell. The chain is Small ribosomal subunit protein eS8 (rps8) from Ictalurus punctatus (Channel catfish).